Here is a 377-residue protein sequence, read N- to C-terminus: MAATEDERLAGSGEGERLDFLRDRHVRFFQRCLQVLPERYSSLETSRLTIAFFALSGLDMLDSLDVVNKDDIIEWIYSLQVLPTEDRSNLNRCGFRGSSYLGIPFNPSKAPGTAHPYDSGHIAMTYTGLSCLVILGDDLSRVNKEACLAGLRALQLEDGSFCAVPEGSENDMRFVYCASCICYMLNNWSGMDMKKAITYIRRSMSYDNGLAQGAGLESHGGSTFCGIASLCLMGKLEEVFSEKELNRIKRWCIMRQQNGYHGRPNKPVDTCYSFWVGATLKLLKIFQYTNFEKNRNYILSTQDRLVGGFAKWPDSHPDALHAYFGICGLSLMEESGICKVHPALNVSTRTSERLLDLHQSWKTKDSKQCSENVHIST.

4 PFTB repeats span residues 144-186 (KEAC…YMLN), 193-234 (MKKA…CLMG), 245-284 (LNRIKRWCIMRQQNGYHGRPNKPVDTCYSFWVGATLKLLK), and 291-333 (FEKN…SLME). Geranylgeranyl diphosphate is bound by residues 219–221 (HGG) and 263–266 (RPNK). The Zn(2+) site is built by D269 and C271. 272–275 (YSFW) provides a ligand contact to geranylgeranyl diphosphate. H321 contacts Zn(2+).

This sequence belongs to the protein prenyltransferase subunit beta family. As to quaternary structure, heterodimer of FNTA and PGGT1B. PGGT1B mediates interaction with substrate peptides. The cofactor is Zn(2+). Mg(2+) is required as a cofactor.

The enzyme catalyses geranylgeranyl diphosphate + L-cysteinyl-[protein] = S-geranylgeranyl-L-cysteinyl-[protein] + diphosphate. Its function is as follows. Catalyzes the transfer of a geranyl-geranyl moiety from geranyl-geranyl pyrophosphate to a cysteine at the fourth position from the C-terminus of proteins having the C-terminal sequence Cys-aliphatic-aliphatic-X. Known substrates include RAC1, RAC2, RAP1A and RAP1B. This chain is Geranylgeranyl transferase type-1 subunit beta (PGGT1B), found in Homo sapiens (Human).